Here is a 530-residue protein sequence, read N- to C-terminus: Glutamate--cysteine ligase (530 aa).

Belongs to the glutamate--cysteine ligase type 1 family. Type 1 subfamily.

The enzyme catalyses L-cysteine + L-glutamate + ATP = gamma-L-glutamyl-L-cysteine + ADP + phosphate + H(+). Its pathway is sulfur metabolism; glutathione biosynthesis; glutathione from L-cysteine and L-glutamate: step 1/2. The protein is Glutamate--cysteine ligase of Saccharophagus degradans (strain 2-40 / ATCC 43961 / DSM 17024).